A 649-amino-acid polypeptide reads, in one-letter code: 1-deoxy-D-xylulose-5-phosphate synthase 1 (649 aa).

Thiamine diphosphate contacts are provided by residues His79 and Ala120–Ser122. Mg(2+) is bound at residue Asp151. Residues Gly152–Ser153, Asn180, Tyr289, and Glu371 contribute to the thiamine diphosphate site. Asn180 contacts Mg(2+).

The protein belongs to the transketolase family. DXPS subfamily. In terms of assembly, homodimer. Mg(2+) is required as a cofactor. It depends on thiamine diphosphate as a cofactor.

It catalyses the reaction D-glyceraldehyde 3-phosphate + pyruvate + H(+) = 1-deoxy-D-xylulose 5-phosphate + CO2. It functions in the pathway metabolic intermediate biosynthesis; 1-deoxy-D-xylulose 5-phosphate biosynthesis; 1-deoxy-D-xylulose 5-phosphate from D-glyceraldehyde 3-phosphate and pyruvate: step 1/1. In terms of biological role, catalyzes the acyloin condensation reaction between C atoms 2 and 3 of pyruvate and glyceraldehyde 3-phosphate to yield 1-deoxy-D-xylulose-5-phosphate (DXP). In Zymomonas mobilis subsp. mobilis (strain ATCC 31821 / ZM4 / CP4), this protein is 1-deoxy-D-xylulose-5-phosphate synthase 1.